We begin with the raw amino-acid sequence, 561 residues long: Dihydroxy-acid dehydratase (561 aa).

C50 is a [2Fe-2S] cluster binding site. Residue D82 coordinates Mg(2+). [2Fe-2S] cluster is bound at residue C123. Residues D124 and K125 each contribute to the Mg(2+) site. Residue K125 is modified to N6-carboxylysine. C195 contributes to the [2Fe-2S] cluster binding site. E447 contributes to the Mg(2+) binding site. Residue S473 is the Proton acceptor of the active site.

The protein belongs to the IlvD/Edd family. Homodimer. [2Fe-2S] cluster serves as cofactor. Requires Mg(2+) as cofactor.

It catalyses the reaction (2R)-2,3-dihydroxy-3-methylbutanoate = 3-methyl-2-oxobutanoate + H2O. It carries out the reaction (2R,3R)-2,3-dihydroxy-3-methylpentanoate = (S)-3-methyl-2-oxopentanoate + H2O. It participates in amino-acid biosynthesis; L-isoleucine biosynthesis; L-isoleucine from 2-oxobutanoate: step 3/4. The protein operates within amino-acid biosynthesis; L-valine biosynthesis; L-valine from pyruvate: step 3/4. Its function is as follows. Functions in the biosynthesis of branched-chain amino acids. Catalyzes the dehydration of (2R,3R)-2,3-dihydroxy-3-methylpentanoate (2,3-dihydroxy-3-methylvalerate) into 2-oxo-3-methylpentanoate (2-oxo-3-methylvalerate) and of (2R)-2,3-dihydroxy-3-methylbutanoate (2,3-dihydroxyisovalerate) into 2-oxo-3-methylbutanoate (2-oxoisovalerate), the penultimate precursor to L-isoleucine and L-valine, respectively. The chain is Dihydroxy-acid dehydratase from Crocosphaera subtropica (strain ATCC 51142 / BH68) (Cyanothece sp. (strain ATCC 51142)).